Reading from the N-terminus, the 234-residue chain is Bromodomain-containing protein DDB_G0271118 (234 aa).

A Bromo domain is found at 1 to 60 (MDLGTIKGELDNNGYSTIKDFTADVRLMFENALTYNADSSPIWKHAKTLLYFHRKHDEHV). Low complexity predominate over residues 134 to 194 (NNNSNNNNNN…SSSSSSSSSS (61 aa)). The interval 134 to 209 (NNNSNNNNNN…KKYSDEERRN (76 aa)) is disordered.

The polypeptide is Bromodomain-containing protein DDB_G0271118 (Dictyostelium discoideum (Social amoeba)).